A 442-amino-acid polypeptide reads, in one-letter code: Putative major teichoic acid biosynthesis protein C (442 aa).

Functionally, unknown. Might be involved in poly(glycerol phosphate) teichoic acid biosynthesis. The chain is Putative major teichoic acid biosynthesis protein C (tagC) from Bacillus subtilis (strain 168).